Reading from the N-terminus, the 845-residue chain is Beta-mannosidase B (845 aa).

Positions 1 to 20 (MSKLQQFPLSKGWSFRDSED) are disordered. Residue asparagine 252 is glycosylated (N-linked (GlcNAc...) asparagine). Catalysis depends on glutamate 432, which acts as the Proton donor. Asparagine 717 and asparagine 723 each carry an N-linked (GlcNAc...) asparagine glycan.

It belongs to the glycosyl hydrolase 2 family. Beta-mannosidase B subfamily.

It carries out the reaction Hydrolysis of terminal, non-reducing beta-D-mannose residues in beta-D-mannosides.. It functions in the pathway glycan metabolism; N-glycan degradation. In terms of biological role, exoglycosidase that cleaves the single beta-linked mannose residue from the non-reducing end of beta-mannosidic oligosaccharides of various complexity and length. Prefers mannobiose over mannotriose and has no activity against polymeric mannan. Is also severely restricted by galactosyl substitutions at the +1 subsite. The sequence is that of Beta-mannosidase B (mndB) from Neosartorya fischeri (strain ATCC 1020 / DSM 3700 / CBS 544.65 / FGSC A1164 / JCM 1740 / NRRL 181 / WB 181) (Aspergillus fischerianus).